A 388-amino-acid polypeptide reads, in one-letter code: Yellow-related salivary protein SP03 (388 aa).

The N-terminal stretch at 1-18 is a signal peptide; that stretch reads MKIFLCLIAVVSLQGVLA. The N-linked (GlcNAc...) asparagine glycan is linked to N29.

This sequence belongs to the major royal jelly protein family. Female salivary gland (at protein level).

It localises to the secreted. Probably modulates blood feeding of sand flies on vertebrate species by binding and sequestering different mediators involved in the host response. Binds biogenic amines. Binds noradrenaline with medium affinity. Binds octopamine with low affinity. Poorly binds histamine, adrenaline and serotonin. This Phlebotomus perniciosus (Phlebotomine sand fly) protein is Yellow-related salivary protein SP03.